We begin with the raw amino-acid sequence, 105 residues long: Met repressor (105 aa).

Belongs to the MetJ family. Homodimer.

Its subcellular location is the cytoplasm. Functionally, this regulatory protein, when combined with SAM (S-adenosylmethionine) represses the expression of the methionine regulon and of enzymes involved in SAM synthesis. In Shigella boydii serotype 18 (strain CDC 3083-94 / BS512), this protein is Met repressor.